The primary structure comprises 199 residues: Peroxiredoxin 2 (199 aa).

The Thioredoxin domain maps to 1–152 (MGQKAPDFTV…IIRVIKALQF (152 aa)). The active-site Cysteine sulfenic acid (-SOH) intermediate is the cysteine 40. Arginine 115 lines the substrate pocket.

It belongs to the peroxiredoxin family. Prx6 subfamily. As to quaternary structure, homodecamer. Pentamer of dimers that assemble into a ring structure.

The protein resides in the cytoplasm. It catalyses the reaction a hydroperoxide + [thioredoxin]-dithiol = an alcohol + [thioredoxin]-disulfide + H2O. In terms of biological role, thiol-specific peroxidase that catalyzes the reduction of hydrogen peroxide and organic hydroperoxides to water and alcohols, respectively. Plays a role in cell protection against oxidative stress by detoxifying peroxides. The sequence is that of Peroxiredoxin 2 from Thermoplasma acidophilum (strain ATCC 25905 / DSM 1728 / JCM 9062 / NBRC 15155 / AMRC-C165).